A 340-amino-acid polypeptide reads, in one-letter code: Thermopsin (340 aa).

Residues 1–28 (MNFKSICLIILLSALIIPYIPQNIYFFP) form the signal peptide. Positions 29–41 (HRNTTGATISSGL) are excised as a propeptide. N-linked (GlcNAc...) asparagine glycosylation is found at asparagine 31, asparagine 65, asparagine 85, asparagine 117, asparagine 148, asparagine 197, asparagine 277, asparagine 287, asparagine 327, and asparagine 334.

This sequence belongs to the peptidase A5 family.

Its subcellular location is the secreted. The enzyme catalyses Specificity similar to pepsin A, prefers bulky hydrophobic side-chains on either side of the scissible bond.. May represent a new class of acid proteases. It digests proteins and peptides in acidic solution. This chain is Thermopsin (thpS), found in Sulfolobus acidocaldarius (strain ATCC 33909 / DSM 639 / JCM 8929 / NBRC 15157 / NCIMB 11770).